A 154-amino-acid chain; its full sequence is Histone H2B.v3 (154 aa).

Residues 1-11 (MVFVKGQKKAT) are compositionally biased toward basic residues. Positions 1–48 (MVFVKGQKKATKGSTQSGEEKTASTTPKVTKTPTEGGEKKRKKRKSDY) are disordered. Over residues 12–27 (KGSTQSGEEKTASTTP) the composition is skewed to polar residues.

The protein belongs to the histone H2B family. In terms of assembly, the nucleosome is a histone octamer containing two molecules each of H2A, H2B, H3 and H4 assembled in one H3-H4 heterotetramer and two H2A-H2B heterodimers. The octamer wraps approximately 147 bp of DNA.

The protein localises to the nucleus. The protein resides in the chromosome. In terms of biological role, core component of nucleosome which plays a central role in DNA double strand break (DSB) repair. Nucleosomes wrap and compact DNA into chromatin, limiting DNA accessibility to the cellular machineries which require DNA as a template. Histones thereby play a central role in transcription regulation, DNA repair, DNA replication and chromosomal stability. DNA accessibility is regulated via a complex set of post-translational modifications of histones, also called histone code, and nucleosome remodeling. The polypeptide is Histone H2B.v3 (H2Bv3) (Dictyostelium discoideum (Social amoeba)).